A 273-amino-acid polypeptide reads, in one-letter code: Dermonecrotic toxin LspaSicTox-alphaIA2iv (273 aa).

The active site involves His-5. The Mg(2+) site is built by Glu-25 and Asp-27. Residue His-41 is the Nucleophile of the active site. Intrachain disulfides connect Cys-45–Cys-51 and Cys-47–Cys-190. Residue Asp-85 participates in Mg(2+) binding.

Belongs to the arthropod phospholipase D family. Class II subfamily. Mg(2+) serves as cofactor. In terms of tissue distribution, expressed by the venom gland.

It is found in the secreted. It catalyses the reaction an N-(acyl)-sphingosylphosphocholine = an N-(acyl)-sphingosyl-1,3-cyclic phosphate + choline. It carries out the reaction an N-(acyl)-sphingosylphosphoethanolamine = an N-(acyl)-sphingosyl-1,3-cyclic phosphate + ethanolamine. The enzyme catalyses a 1-acyl-sn-glycero-3-phosphocholine = a 1-acyl-sn-glycero-2,3-cyclic phosphate + choline. The catalysed reaction is a 1-acyl-sn-glycero-3-phosphoethanolamine = a 1-acyl-sn-glycero-2,3-cyclic phosphate + ethanolamine. Its function is as follows. Dermonecrotic toxins cleave the phosphodiester linkage between the phosphate and headgroup of certain phospholipids (sphingolipid and lysolipid substrates), forming an alcohol (often choline) and a cyclic phosphate. This toxin acts on sphingomyelin (SM). It may also act on ceramide phosphoethanolamine (CPE), lysophosphatidylcholine (LPC) and lysophosphatidylethanolamine (LPE), but not on lysophosphatidylserine (LPS), and lysophosphatidylglycerol (LPG). It acts by transphosphatidylation, releasing exclusively cyclic phosphate products as second products. Induces dermonecrosis, hemolysis, increased vascular permeability, edema, inflammatory response, and platelet aggregation. The chain is Dermonecrotic toxin LspaSicTox-alphaIA2iv from Loxosceles spadicea (Recluse spider).